The following is a 335-amino-acid chain: Beta-hexosaminidase (335 aa).

Substrate contacts are provided by residues aspartate 60, arginine 68, arginine 133, and 163-164 (KH). Histidine 176 acts as the Proton donor/acceptor in catalysis. Catalysis depends on aspartate 247, which acts as the Nucleophile.

Belongs to the glycosyl hydrolase 3 family. NagZ subfamily. In terms of assembly, monomer.

The protein resides in the cytoplasm. It carries out the reaction Hydrolysis of terminal non-reducing N-acetyl-D-hexosamine residues in N-acetyl-beta-D-hexosaminides.. Its pathway is cell wall biogenesis; peptidoglycan recycling. Its function is as follows. Plays a role in peptidoglycan recycling by cleaving the terminal beta-1,4-linked N-acetylglucosamine (GlcNAc) from peptide-linked peptidoglycan fragments, giving rise to free GlcNAc, anhydro-N-acetylmuramic acid and anhydro-N-acetylmuramic acid-linked peptides. The protein is Beta-hexosaminidase of Xylella fastidiosa (strain 9a5c).